The primary structure comprises 629 residues: Probable potassium transport system protein Kup 3 (629 aa).

Helical transmembrane passes span 20-40 (LSLS…LYTF), 54-74 (VTTI…IASV), 106-126 (PFII…GTIT), 143-163 (PSLK…LFAI), 171-191 (IGKA…ILGA), 212-232 (FLFS…LCAT), 253-273 (WFGL…ALVL), 291-311 (FLLP…QAII), 343-363 (IYIG…IIGF), 372-392 (AYGI…FIAL), 400-420 (IITS…FFAA), and 425-445 (FING…MMYI).

It belongs to the HAK/KUP transporter (TC 2.A.72) family.

The protein localises to the cell inner membrane. It catalyses the reaction K(+)(in) + H(+)(in) = K(+)(out) + H(+)(out). In terms of biological role, transport of potassium into the cell. Likely operates as a K(+):H(+) symporter. This is Probable potassium transport system protein Kup 3 from Legionella pneumophila (strain Paris).